The sequence spans 317 residues: Toluene-4-sulfonate monooxygenase system reductase subunit TsaB1 (317 aa).

The FAD-binding FR-type domain maps to 2–108 (SADVPVTVAA…RATCSEMAPE (107 aa)). NAD(+) is bound at residue 110–220 (RRVLLLAGGI…PGSVRMERFK (111 aa)). Positions 230 to 317 (QPFELVLQRA…CGGGRLVLDI (88 aa)) constitute a 2Fe-2S ferredoxin-type domain. [2Fe-2S] cluster is bound by residues Cys-266, Cys-271, Cys-274, and Cys-304.

In terms of assembly, monomer. Part of the p-toluenesulfonate methyl-monooxygenase complex TsaBM, comprising the reductase TsaB and the oxygenase TsaM. FMN serves as cofactor.

In terms of biological role, iron-sulfur flavoprotein carrying electrons from NADH to the oxygenase TsaM. Involved in the toluene-4-sulfonate degradation pathway. This Comamonas testosteroni (Pseudomonas testosteroni) protein is Toluene-4-sulfonate monooxygenase system reductase subunit TsaB1 (tsaB1).